Reading from the N-terminus, the 763-residue chain is Phosphoglycerol transferase I (763 aa).

4 helical membrane-spanning segments follow: residues 1 to 21 (MSEL…AWKA), 26 to 46 (WWFA…ITLY), 77 to 97 (ILPG…LGWI), and 108 to 128 (FGYS…SPAF).

Belongs to the OpgB family.

It localises to the cell inner membrane. It catalyses the reaction a phosphatidylglycerol + a membrane-derived-oligosaccharide D-glucose = a 1,2-diacyl-sn-glycerol + a membrane-derived-oligosaccharide 6-(glycerophospho)-D-glucose.. The protein operates within glycan metabolism; osmoregulated periplasmic glucan (OPG) biosynthesis. Transfers a phosphoglycerol residue from phosphatidylglycerol to the membrane-bound nascent glucan backbones. This chain is Phosphoglycerol transferase I, found in Escherichia fergusonii (strain ATCC 35469 / DSM 13698 / CCUG 18766 / IAM 14443 / JCM 21226 / LMG 7866 / NBRC 102419 / NCTC 12128 / CDC 0568-73).